The following is a 104-amino-acid chain: uncharacterized protein (104 aa).

Positions 3–104 (VFEKIIQGEI…HFHILSGDKH (102 aa)) constitute an HIT domain. A Histidine triad motif motif is present at residues 93–97 (HLHFH).

This is an uncharacterized protein from Helicobacter pylori (strain J99 / ATCC 700824) (Campylobacter pylori J99).